Reading from the N-terminus, the 152-residue chain is Ribonuclease pancreatic (152 aa).

Residues 1–24 (MALDKSVILLPLLVLVLLVLGCLG) form the signal peptide. Substrate is bound by residues K31 and R34. Residue H36 is the Proton acceptor of the active site. N-linked (GlcNAc...) asparagine glycosylation is present at N46. 4 disulfide bridges follow: C50/C108, C64/C119, C82/C134, and C89/C96. Substrate-binding positions include 65 to 69 (KPVNT), K90, and R109. N-linked (GlcNAc...) asparagine glycosylation occurs at N112. The Proton donor role is filled by H143.

The protein belongs to the pancreatic ribonuclease family. In terms of assembly, monomer. Interacts with and forms tight 1:1 complexes with RNH1. Dimerization of two such complexes may occur. Interaction with RNH1 inhibits this protein.

The protein resides in the secreted. It catalyses the reaction an [RNA] containing cytidine + H2O = an [RNA]-3'-cytidine-3'-phosphate + a 5'-hydroxy-ribonucleotide-3'-[RNA].. It carries out the reaction an [RNA] containing uridine + H2O = an [RNA]-3'-uridine-3'-phosphate + a 5'-hydroxy-ribonucleotide-3'-[RNA].. Endonuclease that catalyzes the cleavage of RNA on the 3' side of pyrimidine nucleotides. Acts on single-stranded and double-stranded RNA. This chain is Ribonuclease pancreatic (RNASE1), found in Papio hamadryas (Hamadryas baboon).